The following is a 506-amino-acid chain: Histidine--tRNA ligase (506 aa).

It belongs to the class-II aminoacyl-tRNA synthetase family. As to quaternary structure, homodimer.

Its subcellular location is the cytoplasm. It catalyses the reaction tRNA(His) + L-histidine + ATP = L-histidyl-tRNA(His) + AMP + diphosphate + H(+). This chain is Histidine--tRNA ligase (hisS), found in Bradyrhizobium diazoefficiens (strain JCM 10833 / BCRC 13528 / IAM 13628 / NBRC 14792 / USDA 110).